A 210-amino-acid chain; its full sequence is Acetoin utilization protein AcuA (210 aa).

The region spanning leucine 20 to asparagine 161 is the N-acetyltransferase domain.

The protein belongs to the acetyltransferase family. As to quaternary structure, monomer.

It participates in ketone degradation; acetoin degradation. Activity is sensitive to salt concentration, a high concentration of KCL (500 mM) is needed for complete inactivation. In terms of biological role, part of the acuABC operon, which is possibly involved in the breakdown of acetoin and butanediol. Acts as an acetyltransferase inactivating acetyl-CoA synthetase AcsA via acetylation at a Lys residue. The protein is Acetoin utilization protein AcuA (acuA) of Bacillus subtilis (strain 168).